The primary structure comprises 243 residues: Probable transcriptional regulatory protein LCA_1307 (243 aa).

Positions 1–21 are disordered; that stretch reads MSGHSKWHNIQGRKNAQDAKR.

The protein belongs to the TACO1 family.

The protein localises to the cytoplasm. The polypeptide is Probable transcriptional regulatory protein LCA_1307 (Latilactobacillus sakei subsp. sakei (strain 23K) (Lactobacillus sakei subsp. sakei)).